A 748-amino-acid polypeptide reads, in one-letter code: Cysteine--tRNA ligase, cytoplasmic (748 aa).

The segment at 1-25 (MAAAPAEQGKGKRVQPPWSPPEGTK) is disordered. C55 provides a ligand contact to Zn(2+). G56 contacts L-cysteine. Positions 57–67 (PTVYDASHMGH) match the 'HIGH' region motif. T96 provides a ligand contact to L-cysteine. Residues 101–104 (KIIK) carry the 'KIIK' region motif. Zn(2+)-binding residues include C348, H373, and E377. H373 is an L-cysteine binding site. The short motif at 406 to 410 (KMSKS) is the 'KMSKS' region element. Position 409 (K409) interacts with ATP. 2 stretches are compositionally biased toward basic and acidic residues: residues 656 to 679 (KIEE…EAAK) and 686 to 717 (PPHE…KELS). The interval 656 to 719 (KIEEEKKRKK…DTEGKELSKG (64 aa)) is disordered.

This sequence belongs to the class-I aminoacyl-tRNA synthetase family. In terms of assembly, homodimer. Zn(2+) serves as cofactor.

It localises to the cytoplasm. It catalyses the reaction tRNA(Cys) + L-cysteine + ATP = L-cysteinyl-tRNA(Cys) + AMP + diphosphate. Its function is as follows. Catalyzes the ATP-dependent ligation of cysteine to tRNA(Cys). This is Cysteine--tRNA ligase, cytoplasmic (CARS1) from Gallus gallus (Chicken).